Reading from the N-terminus, the 417-residue chain is Alpha-galactosidase (417 aa).

Residues 1-55 (MARASSSSSPPSPRLLLLLLVAVAATLLPEAAALGNFTAESRGARWRSRRARRRA) form the signal peptide. Alpha-D-galactose-binding residues include Trp-71, Asp-106, Asp-107, Cys-156, Lys-183, Asp-185, Trp-219, Arg-236, and Asp-240. Disulfide bonds link Cys-76–Cys-108 and Cys-156–Cys-187. Asp-185 acts as the Nucleophile in catalysis. Catalysis depends on Asp-240, which acts as the Proton donor.

The protein belongs to the glycosyl hydrolase 27 family.

It carries out the reaction Hydrolysis of terminal, non-reducing alpha-D-galactose residues in alpha-D-galactosides, including galactose oligosaccharides, galactomannans and galactolipids.. The catalysed reaction is melibiose + H2O = D-galactose + D-glucose. The enzyme catalyses raffinose + H2O = sucrose + D-galactose. It catalyses the reaction stachyose + H2O = raffinose + D-galactose. It carries out the reaction alpha-D-Gal-(1-&gt;6)-beta-D-Man-(1-&gt;4)-beta-D-Man-(1-&gt;4)-D-Man + H2O = beta-D-Man-(1-&gt;4)-beta-D-Man-(1-&gt;4)-D-Man + D-galactose. The catalysed reaction is beta-D-Man-(1-&gt;4)-[alpha-D-Gal-(1-&gt;6)]-beta-D-Man-(1-&gt;4)-beta-D-Man-(1-&gt;4)-D-Man + H2O = beta-D-Man-(1-&gt;4)-beta-D-Man-(1-&gt;4)-beta-D-Man-(1-&gt;4)-D-Man + D-galactose. Its activity is regulated as follows. 1 mM Hg(2+) and Ag(2+) decrease activity by 98% and 96%, respectively. 1 mM Para-chloromercuribenzoic acid (PCMB) completely inhibits enzymatic activity. Its function is as follows. Hydrolyzes melibiose, raffinose and stachyose in the following decreasing order of reactivity: raffinose, melibiose, stachyose. Acts on both the terminal alpha-galactosyl residue and the side-chain alpha-galactosyl residue of the galactomanno-oligosaccharides. This Oryza sativa subsp. japonica (Rice) protein is Alpha-galactosidase.